The following is a 1665-amino-acid chain: Cortactin-binding protein 2 (1665 aa).

Disordered regions lie at residues 1-23, 201-235, 360-441, 455-480, and 499-617; these read MATD…AGAT, EEKK…SEFD, ASHG…LHPG, GNAN…PTSR, and RFTS…PKPS. Positions 120–276 form a coiled coil; the sequence is KMQERMSTQL…EQLKRGNDNK (157 aa). Positions 385 to 395 are enriched in polar residues; the sequence is GPSTGSTADLT. Arginine 499 bears the Asymmetric dimethylarginine mark. Positions 584–594 are enriched in polar residues; the sequence is TVASPPSSLPQ. ANK repeat units follow at residues 710–740, 744–773, 777–806, 810–839, 843–872, and 914–944; these read GRPT…DINY, DGHS…QVDA, NGFT…NINH, GGQT…DRSI, DGWT…PAHG, and EGWT…EPER. Positions 1447–1484 are disordered; the sequence is CSKKKGESGAWRKVSTSPRKKSSRFSSPTWNKPDLSEE. A Phosphoserine modification is found at serine 1526. The span at 1544–1562 shows a compositional bias: basic and acidic residues; sequence SESDISKIADSRDDLRRFD. A disordered region spans residues 1544–1648; it reads SESDISKIAD…RQIEINNNSK (105 aa). Composition is skewed to polar residues over residues 1564–1576 and 1584–1604; these read PGNN…TVNN and KEVS…QSKT. The segment covering 1626–1640 has biased composition (low complexity); sequence SQNTKRSSSSSNTRQ.

In terms of assembly, interacts with CTTN/cortactin SH3 domain. Interacts with STRN, STRN4/zinedin and MOB4/phocein; this interactions mediate the association with the STRIPAK core complex and may regulate dendritic spine distribution of the STRIPAK complex in hippocampal neurons. Activation of glutamate receptors weakens the interaction with STRN and STRN4.

It is found in the cytoplasm. Its subcellular location is the cell cortex. It localises to the cell projection. The protein resides in the dendritic spine. Functionally, regulates the dendritic spine distribution of CTTN/cortactin in hippocampal neurons, and thus controls dendritic spinogenesis and dendritic spine maintenance. Associates with the striatin-interacting phosphatase and kinase (STRIPAK) core complex to regulate dendritic spine distribution of the STRIPAK complex in hippocampal neurons. This is Cortactin-binding protein 2 (CTTNBP2) from Equus caballus (Horse).